Consider the following 427-residue polypeptide: Serine--tRNA ligase (427 aa).

Position 235-237 (235-237) interacts with L-serine; that stretch reads TAE. ATP-binding positions include 266–268 and V282; that span reads RRE. Residue E289 participates in L-serine binding. 353 to 356 is a binding site for ATP; that stretch reads EASS. S389 serves as a coordination point for L-serine.

Belongs to the class-II aminoacyl-tRNA synthetase family. Type-1 seryl-tRNA synthetase subfamily. In terms of assembly, homodimer. The tRNA molecule binds across the dimer.

Its subcellular location is the cytoplasm. The catalysed reaction is tRNA(Ser) + L-serine + ATP = L-seryl-tRNA(Ser) + AMP + diphosphate + H(+). It carries out the reaction tRNA(Sec) + L-serine + ATP = L-seryl-tRNA(Sec) + AMP + diphosphate + H(+). It functions in the pathway aminoacyl-tRNA biosynthesis; selenocysteinyl-tRNA(Sec) biosynthesis; L-seryl-tRNA(Sec) from L-serine and tRNA(Sec): step 1/1. Functionally, catalyzes the attachment of serine to tRNA(Ser). Is also able to aminoacylate tRNA(Sec) with serine, to form the misacylated tRNA L-seryl-tRNA(Sec), which will be further converted into selenocysteinyl-tRNA(Sec). This chain is Serine--tRNA ligase, found in Chlorobaculum parvum (strain DSM 263 / NCIMB 8327) (Chlorobium vibrioforme subsp. thiosulfatophilum).